The sequence spans 302 residues: Aspartate carbamoyltransferase catalytic subunit (302 aa).

Carbamoyl phosphate is bound by residues Arg51 and Thr52. An L-aspartate-binding site is contributed by Lys80. 3 residues coordinate carbamoyl phosphate: Arg101, His129, and Gln132. Residues Arg162 and Arg223 each coordinate L-aspartate. 2 residues coordinate carbamoyl phosphate: Leu261 and Pro262.

The protein belongs to the aspartate/ornithine carbamoyltransferase superfamily. ATCase family. In terms of assembly, heterododecamer (2C3:3R2) of six catalytic PyrB chains organized as two trimers (C3), and six regulatory PyrI chains organized as three dimers (R2).

It carries out the reaction carbamoyl phosphate + L-aspartate = N-carbamoyl-L-aspartate + phosphate + H(+). It functions in the pathway pyrimidine metabolism; UMP biosynthesis via de novo pathway; (S)-dihydroorotate from bicarbonate: step 2/3. In terms of biological role, catalyzes the condensation of carbamoyl phosphate and aspartate to form carbamoyl aspartate and inorganic phosphate, the committed step in the de novo pyrimidine nucleotide biosynthesis pathway. The protein is Aspartate carbamoyltransferase catalytic subunit of Chromobacterium violaceum (strain ATCC 12472 / DSM 30191 / JCM 1249 / CCUG 213 / NBRC 12614 / NCIMB 9131 / NCTC 9757 / MK).